We begin with the raw amino-acid sequence, 223 residues long: UPF0441 protein YgiB (223 aa).

Over residues 178-195 (TVPKTAMAPKPATTTTVT) the composition is skewed to low complexity. The tract at residues 178-223 (TVPKTAMAPKPATTTTVTRGGFGESIAKQSTMQRSATGTSSRSMGG) is disordered. Polar residues predominate over residues 204–223 (AKQSTMQRSATGTSSRSMGG).

It belongs to the UPF0441 family.

The polypeptide is UPF0441 protein YgiB (Shigella boydii serotype 4 (strain Sb227)).